A 151-amino-acid polypeptide reads, in one-letter code: Large ribosomal subunit protein bL9 (151 aa).

Belongs to the bacterial ribosomal protein bL9 family.

Its function is as follows. Binds to the 23S rRNA. This is Large ribosomal subunit protein bL9 from Chlorobium phaeobacteroides (strain DSM 266 / SMG 266 / 2430).